The chain runs to 209 residues: Mitochondrial import inner membrane translocase subunit Tim23 (209 aa).

Transmembrane regions (helical) follow at residues 73-93 (FELA…FGAM), 125-145 (ALWA…GVII), and 172-194 (GGLR…YALY).

The protein belongs to the Tim17/Tim22/Tim23 family. In terms of assembly, component of the TIM23 complex at least composed of TIMM23, TIMM17 (TIMM17A or TIMM17B) and TIMM50; within this complex, directly interacts with TIMM50. The complex interacts with the TIMM44 component of the PAM complex and with DNAJC15. Upon mitochondrial depolarization, interacts with PINK1; the interaction is required for PINK1 accumulation at the outer mitochondrial membrane, kinase activation by autophosphorylation and PRKN recruitement to mitochondria.

It is found in the mitochondrion inner membrane. Its function is as follows. Essential component of the TIM23 complex, a complex that mediates the translocation of transit peptide-containing proteins across the mitochondrial inner membrane. Has a role in the activation of stress-induced mitophagy by protecting PINK1 from OMA1-mediated degradation and facilitating its accumulation at the outer mitochondrial membrane in response to depolarization. This is Mitochondrial import inner membrane translocase subunit Tim23 (TIMM23) from Pongo abelii (Sumatran orangutan).